The sequence spans 167 residues: uncharacterized protein (167 aa).

An N-terminal signal peptide occupies residues 1-25 (MPFSVTKFSLIFVALLLAEALVAQS).

This is an uncharacterized protein from Caenorhabditis elegans.